The sequence spans 239 residues: Fatty acid metabolism regulator protein (239 aa).

The HTH gntR-type domain occupies 6 to 74 (QSPAGFAEEY…HGKPTKVNNF (69 aa)). The segment at residues 34–53 (ERELSELIGVTRTTLREVLQ) is a DNA-binding region (H-T-H motif).

In terms of assembly, homodimer.

It is found in the cytoplasm. Functionally, multifunctional regulator of fatty acid metabolism. The polypeptide is Fatty acid metabolism regulator protein (Shigella flexneri).